The sequence spans 474 residues: PRAME family member 8 (474 aa).

An LRR 1; degenerate repeat occupies 97-122; sequence QSKLQVLDLRNVDENFCDIFSGATAS. The LRR 2; degenerate repeat unit spans residues 177–201; that stretch reads HVCCKELQVFGMPIHSIIEVLNMVE. One copy of the LRR 3; degenerate repeat lies at 202–228; that stretch reads LDCIQEVEVCCPWELSTLVKFAPYLGQ. The stretch at 229-264 is one LRR 4; degenerate repeat; the sequence is MRNLRKLVLFNIRASACIPPDNKGQFIARFTSQFLK. LRR repeat units lie at residues 265–290, 291–322, 323–341, 347–374, and 375–399; these read LDYFQNLSMHSVSFLEGHLDQLLRCL, QASLEMVVMTDCLLSESDLKHLSWCPSIRQLK, ELDLRGVTLTHFSPEPLTG, VATLQTLDLEDCGIMDSQLSAILPVLSR, and CSQLSTFSFCGNLISMAALENLLRH.

The protein belongs to the PRAME family.

This is PRAME family member 8 from Homo sapiens (Human).